The following is a 397-amino-acid chain: Tryptophan synthase beta chain (397 aa).

Lysine 87 is subject to N6-(pyridoxal phosphate)lysine.

Belongs to the TrpB family. Tetramer of two alpha and two beta chains. Requires pyridoxal 5'-phosphate as cofactor.

The enzyme catalyses (1S,2R)-1-C-(indol-3-yl)glycerol 3-phosphate + L-serine = D-glyceraldehyde 3-phosphate + L-tryptophan + H2O. The protein operates within amino-acid biosynthesis; L-tryptophan biosynthesis; L-tryptophan from chorismate: step 5/5. Functionally, the beta subunit is responsible for the synthesis of L-tryptophan from indole and L-serine. The chain is Tryptophan synthase beta chain from Citrobacter koseri (strain ATCC BAA-895 / CDC 4225-83 / SGSC4696).